We begin with the raw amino-acid sequence, 702 residues long: Ribosomal RNA large subunit methyltransferase K/L (702 aa).

In terms of domain architecture, THUMP spans 43–154; sequence LIYQSLMWSR…KETAHISLDL (112 aa).

The protein belongs to the methyltransferase superfamily. RlmKL family.

It localises to the cytoplasm. The catalysed reaction is guanosine(2445) in 23S rRNA + S-adenosyl-L-methionine = N(2)-methylguanosine(2445) in 23S rRNA + S-adenosyl-L-homocysteine + H(+). It carries out the reaction guanosine(2069) in 23S rRNA + S-adenosyl-L-methionine = N(2)-methylguanosine(2069) in 23S rRNA + S-adenosyl-L-homocysteine + H(+). Its function is as follows. Specifically methylates the guanine in position 2445 (m2G2445) and the guanine in position 2069 (m7G2069) of 23S rRNA. The protein is Ribosomal RNA large subunit methyltransferase K/L of Enterobacter sp. (strain 638).